A 185-amino-acid polypeptide reads, in one-letter code: Ribosome-recycling factor (185 aa).

The protein belongs to the RRF family.

The protein localises to the cytoplasm. In terms of biological role, responsible for the release of ribosomes from messenger RNA at the termination of protein biosynthesis. May increase the efficiency of translation by recycling ribosomes from one round of translation to another. The polypeptide is Ribosome-recycling factor (Shewanella loihica (strain ATCC BAA-1088 / PV-4)).